A 272-amino-acid chain; its full sequence is uncharacterized protein (272 aa).

One can recognise an AB hydrolase-1 domain in the interval 20 to 133 (PVLIFIPGAN…PPINTFLPDS (114 aa)).

This sequence belongs to the AB hydrolase superfamily.

This is an uncharacterized protein from Staphylococcus aureus (strain MSSA476).